Here is a 279-residue protein sequence, read N- to C-terminus: Putative pyruvate, phosphate dikinase regulatory protein (279 aa).

153 to 160 (GVSRTSKT) provides a ligand contact to ADP.

This sequence belongs to the pyruvate, phosphate/water dikinase regulatory protein family. PDRP subfamily.

The enzyme catalyses N(tele)-phospho-L-histidyl/L-threonyl-[pyruvate, phosphate dikinase] + ADP = N(tele)-phospho-L-histidyl/O-phospho-L-threonyl-[pyruvate, phosphate dikinase] + AMP + H(+). It catalyses the reaction N(tele)-phospho-L-histidyl/O-phospho-L-threonyl-[pyruvate, phosphate dikinase] + phosphate + H(+) = N(tele)-phospho-L-histidyl/L-threonyl-[pyruvate, phosphate dikinase] + diphosphate. Its function is as follows. Bifunctional serine/threonine kinase and phosphorylase involved in the regulation of the pyruvate, phosphate dikinase (PPDK) by catalyzing its phosphorylation/dephosphorylation. In Rhodopseudomonas palustris (strain ATCC BAA-98 / CGA009), this protein is Putative pyruvate, phosphate dikinase regulatory protein.